We begin with the raw amino-acid sequence, 212 residues long: Small ribosomal subunit protein uS2 (212 aa).

Positions 190-212 (LSPDAPEDQPAPVSEFETKVKMV) are disordered.

This sequence belongs to the universal ribosomal protein uS2 family.

In Ignicoccus hospitalis (strain KIN4/I / DSM 18386 / JCM 14125), this protein is Small ribosomal subunit protein uS2.